A 317-amino-acid polypeptide reads, in one-letter code: Melanocyte-stimulating hormone receptor (317 aa).

The Extracellular portion of the chain corresponds to 1–37 (MPVQGSQRRLLGSLNSTPTATPHLGLAANQTGARCRE). N29 carries N-linked (GlcNAc...) asparagine glycosylation. A helical membrane pass occupies residues 38–63 (VSIPDGLFLSLGLVSLVENVLVVTAI). Topologically, residues 64–72 (AKNRNLHSP) are cytoplasmic. Residues 73 to 93 (MYCFICCLALSDLLVSGSNML) form a helical membrane-spanning segment. Residues 94-118 (ETAVTLLLEAGALVARAAVVQQLDN) lie on the Extracellular side of the membrane. A helical transmembrane segment spans residues 119–140 (VIDVITCSSMLSSLCFLGAIAV). At 141–163 (DRYISIFYALRYHSIVTLPRAQR) the chain is on the cytoplasmic side. A helical transmembrane segment spans residues 164 to 183 (AIAAIWVASVLCSTLFIAYY). Topologically, residues 184 to 191 (DHAAVLLC) are extracellular. Residues 192–211 (LVVFFLAMLVLMAVLYVHML) form a helical membrane-spanning segment. Over 212 to 240 (ARACQHAQGIARLHKRQRLAHQGFGLKGA) the chain is Cytoplasmic. A helical transmembrane segment spans residues 241 to 266 (ATLTILLGIFFLCWGPFFLHLTLIVL). Residues 267–279 (CPQHPTCSCIFKN) are Extracellular-facing. The chain crosses the membrane as a helical span at residues 280–300 (FNLFLALIICNAIIDPLIYAF). Over 301-317 (RSQELRRTLKEVLLCSW) the chain is Cytoplasmic. A lipid anchor (S-palmitoyl cysteine) is attached at C315.

This sequence belongs to the G-protein coupled receptor 1 family. In terms of assembly, interacts with MGRN1, but does not undergo MGRN1-mediated ubiquitination; this interaction competes with GNAS-binding and thus inhibits agonist-induced cAMP production. Interacts with OPN3; the interaction results in a decrease in MC1R-mediated cAMP signaling and ultimately a decrease in melanin production in melanocytes. Expressed in the adrenal gland.

The protein resides in the cell membrane. Functionally, receptor for MSH (alpha, beta and gamma) and ACTH. The activity of this receptor is mediated by G proteins which activate adenylate cyclase. Mediates melanogenesis, the production of eumelanin (black/brown) and phaeomelanin (red/yellow), via regulation of cAMP signaling in melanocytes. In Macaca mulatta (Rhesus macaque), this protein is Melanocyte-stimulating hormone receptor (MC1R).